We begin with the raw amino-acid sequence, 451 residues long: Tryptophan biosynthesis protein TrpCF (451 aa).

Residues 1–256 (MQETILNKII…TNIKSLIIGD (256 aa)) form an indole-3-glycerol phosphate synthase region. Residues 257–451 (NKVCGLTRII…ISLIFKKLTF (195 aa)) form an N-(5'-phosphoribosyl)anthranilate isomerase region.

It in the N-terminal section; belongs to the TrpC family. This sequence in the C-terminal section; belongs to the TrpF family. Monomer.

The enzyme catalyses N-(5-phospho-beta-D-ribosyl)anthranilate = 1-(2-carboxyphenylamino)-1-deoxy-D-ribulose 5-phosphate. It carries out the reaction 1-(2-carboxyphenylamino)-1-deoxy-D-ribulose 5-phosphate + H(+) = (1S,2R)-1-C-(indol-3-yl)glycerol 3-phosphate + CO2 + H2O. It functions in the pathway amino-acid biosynthesis; L-tryptophan biosynthesis; L-tryptophan from chorismate: step 3/5. The protein operates within amino-acid biosynthesis; L-tryptophan biosynthesis; L-tryptophan from chorismate: step 4/5. In terms of biological role, bifunctional enzyme that catalyzes two sequential steps of tryptophan biosynthetic pathway. The first reaction is catalyzed by the isomerase, coded by the TrpF domain; the second reaction is catalyzed by the synthase, coded by the TrpC domain. The sequence is that of Tryptophan biosynthesis protein TrpCF (trpC) from Buchnera aphidicola subsp. Schizaphis graminum (strain Sg).